A 191-amino-acid polypeptide reads, in one-letter code: Large ribosomal subunit protein uL6 (191 aa).

The protein belongs to the universal ribosomal protein uL6 family. Component of the large ribosomal subunit. Mature ribosomes consist of a small (40S) and a large (60S) subunit. The 40S subunit contains about 32 different proteins and 1 molecule of RNA (18S). The 60S subunit contains 45 different proteins and 3 molecules of RNA (25S, 5.8S and 5S).

Its subcellular location is the cytoplasm. Its function is as follows. Component of the ribosome, a large ribonucleoprotein complex responsible for the synthesis of proteins in the cell. The small ribosomal subunit (SSU) binds messenger RNAs (mRNAs) and translates the encoded message by selecting cognate aminoacyl-transfer RNA (tRNA) molecules. The large subunit (LSU) contains the ribosomal catalytic site termed the peptidyl transferase center (PTC), which catalyzes the formation of peptide bonds, thereby polymerizing the amino acids delivered by tRNAs into a polypeptide chain. The nascent polypeptides leave the ribosome through a tunnel in the LSU and interact with protein factors that function in enzymatic processing, targeting, and the membrane insertion of nascent chains at the exit of the ribosomal tunnel. The protein is Large ribosomal subunit protein uL6 of Candida albicans (strain SC5314 / ATCC MYA-2876) (Yeast).